Here is an 866-residue protein sequence, read N- to C-terminus: Putative linoleate 9S-lipoxygenase 3 (866 aa).

One can recognise a PLAT domain in the interval 33–161 (NDFGATVIDG…KYRYDRVFFA (129 aa)). One can recognise a Lipoxygenase domain in the interval 164–866 (AYLPSQMPAA…AKGIPNSISI (703 aa)). The disordered stretch occupies residues 206–250 (YNDLGSPDSGNPRPILGGSPDTPYPRRGRTGRKPTTTDPDSESRL). Positions 521, 526, 712, 716, and 866 each coordinate Fe cation.

It belongs to the lipoxygenase family. Requires Fe cation as cofactor.

It carries out the reaction (9Z,12Z)-octadecadienoate + O2 = (9S)-hydroperoxy-(10E,12Z)-octadecadienoate. It participates in lipid metabolism; oxylipin biosynthesis. Its function is as follows. Plant lipoxygenase may be involved in a number of diverse aspects of plant physiology including growth and development, pest resistance, and senescence or responses to wounding. Catalyzes the hydroperoxidation of lipids containing a cis,cis-1,4-pentadiene structure. The polypeptide is Putative linoleate 9S-lipoxygenase 3 (Oryza sativa subsp. japonica (Rice)).